We begin with the raw amino-acid sequence, 627 residues long: Membrane protein insertase YidC (627 aa).

The next 6 membrane-spanning stretches (helical) occupy residues Lys-3–Asn-23, Trp-376–Tyr-396, Leu-450–Ile-470, Phe-502–Ile-522, Glu-534–Phe-554, and Ala-558–Ser-578.

This sequence belongs to the OXA1/ALB3/YidC family. Type 1 subfamily. Interacts with the Sec translocase complex via SecD. Specifically interacts with transmembrane segments of nascent integral membrane proteins during membrane integration.

The protein localises to the cell inner membrane. Required for the insertion and/or proper folding and/or complex formation of integral membrane proteins into the membrane. Involved in integration of membrane proteins that insert both dependently and independently of the Sec translocase complex, as well as at least some lipoproteins. Aids folding of multispanning membrane proteins. This is Membrane protein insertase YidC from Porphyromonas gingivalis (strain ATCC 33277 / DSM 20709 / CIP 103683 / JCM 12257 / NCTC 11834 / 2561).